We begin with the raw amino-acid sequence, 80 residues long: Probable small nuclear ribonucleoprotein G (80 aa).

The Sm domain maps to 5-76 (GQPPDLKKYM…IVTVEALEPV (72 aa)).

This sequence belongs to the snRNP Sm proteins family.

It is found in the nucleus. In terms of biological role, probable common Sm protein, is found in U1 and U2 snRNPs and may be part of the spliceosome. This Arabidopsis thaliana (Mouse-ear cress) protein is Probable small nuclear ribonucleoprotein G.